Reading from the N-terminus, the 198-residue chain is FMN-dependent NADH:quinone oxidoreductase (198 aa).

Residue 92–95 coordinates FMN; sequence MWNL.

Belongs to the azoreductase type 1 family. As to quaternary structure, homodimer. It depends on FMN as a cofactor.

The enzyme catalyses 2 a quinone + NADH + H(+) = 2 a 1,4-benzosemiquinone + NAD(+). The catalysed reaction is N,N-dimethyl-1,4-phenylenediamine + anthranilate + 2 NAD(+) = 2-(4-dimethylaminophenyl)diazenylbenzoate + 2 NADH + 2 H(+). In terms of biological role, quinone reductase that provides resistance to thiol-specific stress caused by electrophilic quinones. Its function is as follows. Also exhibits azoreductase activity. Catalyzes the reductive cleavage of the azo bond in aromatic azo compounds to the corresponding amines. This is FMN-dependent NADH:quinone oxidoreductase from Clostridium beijerinckii (strain ATCC 51743 / NCIMB 8052) (Clostridium acetobutylicum).